Reading from the N-terminus, the 219-residue chain is 2-hydroxy-3-keto-5-methylthiopentenyl-1-phosphate phosphatase (219 aa).

This sequence belongs to the HAD-like hydrolase superfamily. MtnX family.

The enzyme catalyses 2-hydroxy-5-methylsulfanyl-3-oxopent-1-enyl phosphate + H2O = 1,2-dihydroxy-5-(methylsulfanyl)pent-1-en-3-one + phosphate. Its pathway is amino-acid biosynthesis; L-methionine biosynthesis via salvage pathway; L-methionine from S-methyl-5-thio-alpha-D-ribose 1-phosphate: step 4/6. Its function is as follows. Dephosphorylates 2-hydroxy-3-keto-5-methylthiopentenyl-1-phosphate (HK-MTPenyl-1-P) yielding 1,2-dihydroxy-3-keto-5-methylthiopentene (DHK-MTPene). This is 2-hydroxy-3-keto-5-methylthiopentenyl-1-phosphate phosphatase from Bacillus cereus (strain 03BB102).